Consider the following 507-residue polypeptide: Cyclin-dependent kinase-like 2 (507 aa).

The 286-residue stretch at 4–289 (YENLGLVGEG…CADLLHHDFF (286 aa)) folds into the Protein kinase domain. Residues 10-18 (VGEGSYGMV) and K33 each bind ATP. A [NKR]KIAxRE motif is present at residues 45–51 (KKIAMRE). D126 serves as the catalytic Proton acceptor. Positions 365–392 (KTEKGTRASNGSCLHDNGTSHKGLSSTS) are disordered.

It belongs to the protein kinase superfamily. CMGC Ser/Thr protein kinase family. CDC2/CDKX subfamily.

Its subcellular location is the cytoplasm. The protein localises to the nucleus. The enzyme catalyses L-seryl-[protein] + ATP = O-phospho-L-seryl-[protein] + ADP + H(+). It carries out the reaction L-threonyl-[protein] + ATP = O-phospho-L-threonyl-[protein] + ADP + H(+). The chain is Cyclin-dependent kinase-like 2 from Rattus norvegicus (Rat).